A 584-amino-acid chain; its full sequence is DNA ligase (584 aa).

ATP is bound at residue E249. K251 functions as the N6-AMP-lysine intermediate in the catalytic mechanism. ATP-binding residues include R256, R271, E301, F341, R416, and K422.

Belongs to the ATP-dependent DNA ligase family. It depends on Mg(2+) as a cofactor.

The catalysed reaction is ATP + (deoxyribonucleotide)n-3'-hydroxyl + 5'-phospho-(deoxyribonucleotide)m = (deoxyribonucleotide)n+m + AMP + diphosphate.. Its function is as follows. DNA ligase that seals nicks in double-stranded DNA during DNA replication, DNA recombination and DNA repair. The chain is DNA ligase from Pyrobaculum arsenaticum (strain DSM 13514 / JCM 11321 / PZ6).